The sequence spans 286 residues: Beta-lactamase SHV-24 (286 aa).

Positions 1 to 21 (MRYIRLCIISLLATLPLAVHA) are cleaved as a signal peptide. Ser66 acts as the Acyl-ester intermediate in catalysis. Cys73 and Cys119 are joined by a disulfide. Catalysis depends on Glu164, which acts as the Proton acceptor. 230 to 232 (KTG) is a substrate binding site.

The protein belongs to the class-A beta-lactamase family.

The enzyme catalyses a beta-lactam + H2O = a substituted beta-amino acid. Its function is as follows. Hydrolyzes ampicillin. Can also hydrolyze cephaloridine, aztreonam and ceftazidime with a low catalytic rate. The protein is Beta-lactamase SHV-24 (bla) of Escherichia coli.